We begin with the raw amino-acid sequence, 714 residues long: Transcription activator of gluconeogenesis UREG_00958 (714 aa).

The disordered stretch occupies residues 1-71 (MTSNARNGPL…NAKDPLRPRR (71 aa)). Positions 38–62 (ESQTQVENSSTKQPNGQTKPMSASN) are enriched in polar residues. The zn(2)-C6 fungal-type DNA-binding region spans 78 to 106 (CFACQRAHLTCGDERPCQRCIKRGIQNSC). 3 disordered regions span residues 176 to 228 (SLSQ…NASG), 274 to 312 (GAGD…TAQP), and 539 to 567 (NTGG…VNPS). A compositionally biased stretch (polar residues) spans 191–228 (FPSQSPVSPTFSITANSATSGNQNMPSSLPASNGNASG). Positions 545–555 (GSTSGTSSRGS) are enriched in low complexity.

It belongs to the ERT1/acuK family.

The protein resides in the nucleus. In terms of biological role, transcription factor which regulates nonfermentable carbon utilization. Activator of gluconeogenetic genes. This Uncinocarpus reesii (strain UAMH 1704) protein is Transcription activator of gluconeogenesis UREG_00958.